The following is a 481-amino-acid chain: UDP-N-acetylmuramoyl-L-alanyl-D-glutamate--L-lysine ligase (481 aa).

Serine 42 serves as a coordination point for UDP-N-acetyl-alpha-D-muramoyl-L-alanyl-D-glutamate. 118 to 124 (GTKGKTT) contacts ATP. UDP-N-acetyl-alpha-D-muramoyl-L-alanyl-D-glutamate is bound by residues glutamine 158, 160–161 (TT), serine 187, and arginine 195. At lysine 229 the chain carries N6-carboxylysine. The short motif at 404–407 (DDPN) is the L-lysine recognition motif element.

The protein belongs to the MurCDEF family. MurE subfamily. Post-translationally, carboxylation is probably crucial for Mg(2+) binding and, consequently, for the gamma-phosphate positioning of ATP.

The protein localises to the cytoplasm. The catalysed reaction is UDP-N-acetyl-alpha-D-muramoyl-L-alanyl-D-glutamate + L-lysine + ATP = UDP-N-acetyl-alpha-D-muramoyl-L-alanyl-gamma-D-glutamyl-L-lysine + ADP + phosphate + H(+). Its pathway is cell wall biogenesis; peptidoglycan biosynthesis. In terms of biological role, catalyzes the addition of L-lysine to the nucleotide precursor UDP-N-acetylmuramoyl-L-alanyl-D-glutamate (UMAG) in the biosynthesis of bacterial cell-wall peptidoglycan. This chain is UDP-N-acetylmuramoyl-L-alanyl-D-glutamate--L-lysine ligase, found in Streptococcus pyogenes serotype M4 (strain MGAS10750).